A 93-amino-acid chain; its full sequence is Pyrimidine/purine nucleoside phosphorylase (93 aa).

This sequence belongs to the nucleoside phosphorylase PpnP family.

It catalyses the reaction a purine D-ribonucleoside + phosphate = a purine nucleobase + alpha-D-ribose 1-phosphate. The catalysed reaction is adenosine + phosphate = alpha-D-ribose 1-phosphate + adenine. It carries out the reaction cytidine + phosphate = cytosine + alpha-D-ribose 1-phosphate. The enzyme catalyses guanosine + phosphate = alpha-D-ribose 1-phosphate + guanine. It catalyses the reaction inosine + phosphate = alpha-D-ribose 1-phosphate + hypoxanthine. The catalysed reaction is thymidine + phosphate = 2-deoxy-alpha-D-ribose 1-phosphate + thymine. It carries out the reaction uridine + phosphate = alpha-D-ribose 1-phosphate + uracil. The enzyme catalyses xanthosine + phosphate = alpha-D-ribose 1-phosphate + xanthine. Its function is as follows. Catalyzes the phosphorolysis of diverse nucleosides, yielding D-ribose 1-phosphate and the respective free bases. Can use uridine, adenosine, guanosine, cytidine, thymidine, inosine and xanthosine as substrates. Also catalyzes the reverse reactions. In Hahella chejuensis (strain KCTC 2396), this protein is Pyrimidine/purine nucleoside phosphorylase.